Reading from the N-terminus, the 454-residue chain is Ribosomal protein uS12 methylthiotransferase RimO (454 aa).

Residues 9–124 (PKIGFVSLGC…VMDAVHLHMP (116 aa)) form the MTTase N-terminal domain. The [4Fe-4S] cluster site is built by cysteine 18, cysteine 54, cysteine 83, cysteine 155, cysteine 159, and cysteine 162. Residues 141–382 (LTPKHFAYLK…MLLQEEISKK (242 aa)) form the Radical SAM core domain. The TRAM domain maps to 385-454 (QAKVGKTMRV…ADAHDLWAEA (70 aa)).

The protein belongs to the methylthiotransferase family. RimO subfamily. [4Fe-4S] cluster is required as a cofactor.

The protein resides in the cytoplasm. It carries out the reaction L-aspartate(89)-[ribosomal protein uS12]-hydrogen + (sulfur carrier)-SH + AH2 + 2 S-adenosyl-L-methionine = 3-methylsulfanyl-L-aspartate(89)-[ribosomal protein uS12]-hydrogen + (sulfur carrier)-H + 5'-deoxyadenosine + L-methionine + A + S-adenosyl-L-homocysteine + 2 H(+). Functionally, catalyzes the methylthiolation of an aspartic acid residue of ribosomal protein uS12. The sequence is that of Ribosomal protein uS12 methylthiotransferase RimO from Herminiimonas arsenicoxydans.